Here is a 479-residue protein sequence, read N- to C-terminus: Glutamyl-tRNA(Gln) amidotransferase subunit A (479 aa).

Catalysis depends on charge relay system residues Lys-71 and Ser-146. Catalysis depends on Ser-170, which acts as the Acyl-ester intermediate.

The protein belongs to the amidase family. GatA subfamily. As to quaternary structure, heterotrimer of A, B and C subunits.

The catalysed reaction is L-glutamyl-tRNA(Gln) + L-glutamine + ATP + H2O = L-glutaminyl-tRNA(Gln) + L-glutamate + ADP + phosphate + H(+). Allows the formation of correctly charged Gln-tRNA(Gln) through the transamidation of misacylated Glu-tRNA(Gln) in organisms which lack glutaminyl-tRNA synthetase. The reaction takes place in the presence of glutamine and ATP through an activated gamma-phospho-Glu-tRNA(Gln). This is Glutamyl-tRNA(Gln) amidotransferase subunit A from Lactobacillus gasseri (strain ATCC 33323 / DSM 20243 / BCRC 14619 / CIP 102991 / JCM 1131 / KCTC 3163 / NCIMB 11718 / NCTC 13722 / AM63).